Consider the following 200-residue polypeptide: Recombination protein RecR (200 aa).

The segment at 58–73 adopts a C4-type zinc-finger fold; that stretch reads CQKCHNISDTTLCSIC. A Toprim domain is found at 81-176; that stretch reads GLICVVENIQ…KLSNIARGVA (96 aa).

This sequence belongs to the RecR family.

Functionally, may play a role in DNA repair. It seems to be involved in an RecBC-independent recombinational process of DNA repair. It may act with RecF and RecO. This is Recombination protein RecR from Amoebophilus asiaticus (strain 5a2).